The sequence spans 129 residues: uncharacterized protein (129 aa).

The segment covering 86-96 has biased composition (acidic residues); that stretch reads NDGFSSDDEPE. A disordered region spans residues 86 to 129; sequence NDGFSSDDEPEEHVILTEDNQGEPSETPQATFDITEFIKTEDED. Positions 103-117 are enriched in polar residues; the sequence is EDNQGEPSETPQATF.

It belongs to the asfivirus D129L family.

This is an uncharacterized protein from African swine fever virus (isolate Tick/South Africa/Pretoriuskop Pr4/1996) (ASFV).